We begin with the raw amino-acid sequence, 309 residues long: Biotin synthase (309 aa).

Residues Asn-35–Ser-259 enclose the Radical SAM core domain. Cys-50, Cys-54, and Cys-57 together coordinate [4Fe-4S] cluster. Cys-94, Cys-125, Cys-185, and Arg-257 together coordinate [2Fe-2S] cluster.

It belongs to the radical SAM superfamily. Biotin synthase family. In terms of assembly, homodimer. [4Fe-4S] cluster serves as cofactor. Requires [2Fe-2S] cluster as cofactor.

The catalysed reaction is (4R,5S)-dethiobiotin + (sulfur carrier)-SH + 2 reduced [2Fe-2S]-[ferredoxin] + 2 S-adenosyl-L-methionine = (sulfur carrier)-H + biotin + 2 5'-deoxyadenosine + 2 L-methionine + 2 oxidized [2Fe-2S]-[ferredoxin]. It functions in the pathway cofactor biosynthesis; biotin biosynthesis; biotin from 7,8-diaminononanoate: step 2/2. Its function is as follows. Catalyzes the conversion of dethiobiotin (DTB) to biotin by the insertion of a sulfur atom into dethiobiotin via a radical-based mechanism. This is Biotin synthase from Rickettsia felis (strain ATCC VR-1525 / URRWXCal2) (Rickettsia azadi).